Here is a 194-residue protein sequence, read N- to C-terminus: MTVGLFGGSFNPPHGGHALVAEIAIRRLKLDQLWWMVTPGNPLKDSRELAPLSERLRLSEEVAEDPRIKVTALEAAFHVRYTADTLALIRNANPDVYFVWVMGADNLASFHRWQRWREIAQNFPIAIIDRPGSTLSYLSSRMAQTFSDSRLDERYAPVLARRMPPAWTFIHGPRSSLSSTALRKVQLKKAPSKK.

The protein belongs to the NadD family.

It carries out the reaction nicotinate beta-D-ribonucleotide + ATP + H(+) = deamido-NAD(+) + diphosphate. Its pathway is cofactor biosynthesis; NAD(+) biosynthesis; deamido-NAD(+) from nicotinate D-ribonucleotide: step 1/1. Functionally, catalyzes the reversible adenylation of nicotinate mononucleotide (NaMN) to nicotinic acid adenine dinucleotide (NaAD). The chain is Probable nicotinate-nucleotide adenylyltransferase from Brucella abortus (strain 2308).